Reading from the N-terminus, the 76-residue chain is Small ribosomal subunit protein bS18 (76 aa).

It belongs to the bacterial ribosomal protein bS18 family. In terms of assembly, part of the 30S ribosomal subunit. Forms a tight heterodimer with protein bS6.

In terms of biological role, binds as a heterodimer with protein bS6 to the central domain of the 16S rRNA, where it helps stabilize the platform of the 30S subunit. In Nitrosomonas eutropha (strain DSM 101675 / C91 / Nm57), this protein is Small ribosomal subunit protein bS18.